We begin with the raw amino-acid sequence, 407 residues long: Digeranylgeranylglycerophospholipid reductase (407 aa).

FAD contacts are provided by Ala-15, Glu-34, Cys-45, Ala-46, Gly-48, Arg-99, Ala-123, Asp-281, Gly-293, and Ile-294.

The protein belongs to the geranylgeranyl reductase family. DGGGPL reductase subfamily. Requires FAD as cofactor.

The enzyme catalyses a 2,3-bis-O-phytanyl-sn-glycerol 1-phospholipid + 8 oxidized 2[4Fe-4S]-[ferredoxin] = a 2,3-bis-O-(geranylgeranyl)-sn-glycerol 1-phospholipid + 8 reduced 2[4Fe-4S]-[ferredoxin] + 16 H(+). It catalyses the reaction 2,3-bis-O-(phytanyl)-sn-glycerol 1-phosphate + 8 oxidized 2[4Fe-4S]-[ferredoxin] = 2,3-bis-O-(geranylgeranyl)-sn-glycerol 1-phosphate + 8 reduced 2[4Fe-4S]-[ferredoxin] + 16 H(+). It carries out the reaction a 2,3-bis-O-phytanyl-sn-glycerol 1-phospholipid + 8 A = a 2,3-bis-O-(geranylgeranyl)-sn-glycerol 1-phospholipid + 8 AH2. The catalysed reaction is CDP-2,3-bis-O-(geranylgeranyl)-sn-glycerol + 8 AH2 = CDP-2,3-bis-O-(phytanyl)-sn-glycerol + 8 A. The enzyme catalyses archaetidylserine + 8 AH2 = 2,3-bis-O-phytanyl-sn-glycero-3-phospho-L-serine + 8 A. The protein operates within membrane lipid metabolism; glycerophospholipid metabolism. Is involved in the reduction of 2,3-digeranylgeranylglycerophospholipids (unsaturated archaeols) into 2,3-diphytanylglycerophospholipids (saturated archaeols) in the biosynthesis of archaeal membrane lipids. Catalyzes the formation of archaetidic acid (2,3-di-O-phytanyl-sn-glyceryl phosphate) from 2,3-di-O-geranylgeranylglyceryl phosphate (DGGGP) via the hydrogenation of each double bond of the isoprenoid chains. Requires the adjacently encoded ferredoxin MA_1485 as the electron donor. Is also probably able to reduce double bonds of geranyl groups in CDP-2,3-bis-O-(geranylgeranyl)-sn-glycerol and archaetidylserine, thus acting at various stages in the biosynthesis of archaeal membrane lipids. The sequence is that of Digeranylgeranylglycerophospholipid reductase from Methanosarcina acetivorans (strain ATCC 35395 / DSM 2834 / JCM 12185 / C2A).